The sequence spans 660 residues: DNA ligase (660 aa).

NAD(+) contacts are provided by residues 32-36 (DEVYD), 81-82 (SM), and glutamate 112. The active-site N6-AMP-lysine intermediate is the lysine 114. NAD(+) is bound by residues arginine 135, glutamate 169, lysine 284, and lysine 308. Cysteine 402, cysteine 405, cysteine 418, and cysteine 423 together coordinate Zn(2+). The 83-residue stretch at 578-660 (VENSPLAHKT…ELLKEAGIEA (83 aa)) folds into the BRCT domain.

Belongs to the NAD-dependent DNA ligase family. LigA subfamily. Requires Mg(2+) as cofactor. It depends on Mn(2+) as a cofactor.

The enzyme catalyses NAD(+) + (deoxyribonucleotide)n-3'-hydroxyl + 5'-phospho-(deoxyribonucleotide)m = (deoxyribonucleotide)n+m + AMP + beta-nicotinamide D-nucleotide.. DNA ligase that catalyzes the formation of phosphodiester linkages between 5'-phosphoryl and 3'-hydroxyl groups in double-stranded DNA using NAD as a coenzyme and as the energy source for the reaction. It is essential for DNA replication and repair of damaged DNA. The polypeptide is DNA ligase (Nitratiruptor sp. (strain SB155-2)).